Reading from the N-terminus, the 391-residue chain is GDSL esterase/lipase 22 (391 aa).

The N-terminal stretch at 1–29 is a signal peptide; that stretch reads MMANNCNLVSVLCVILVLTLFHNPITVAG. The active-site Nucleophile is the serine 43. N-linked (GlcNAc...) asparagine glycosylation is found at asparagine 105, asparagine 165, and asparagine 288. Residues aspartate 322 and histidine 325 contribute to the active site. Residues 372 to 391 are disordered; it reads PATVHASDSSSSTSRGYEYY.

Belongs to the 'GDSL' lipolytic enzyme family. As to quaternary structure, component of the PYK10 complex, at least composed of PYK10/BGLU23, BGLU21, BGLU22, JAL22, JAL23, PBP1/JAL30, PBP2/JAL31, JAL32, JAL33, JAL34, JAL35, GLL22 and GLL23.

It localises to the secreted. In Arabidopsis thaliana (Mouse-ear cress), this protein is GDSL esterase/lipase 22 (GLL22).